The primary structure comprises 349 residues: E3 ubiquitin-protein ligase SINA-like 10 (349 aa).

A disordered region spans residues 1–77; it reads MARFSVCGGD…STSDDSDREV (77 aa). An RING-type; degenerate zinc finger spans residues 113 to 149; that stretch reads CPICCEPLKIPIFQCDNGHLACTLCCTKVRNRCPSCT. The segment at 163–344 is SBD; it reads VIEASRVSCL…NLQIWIGHGR (182 aa). The SIAH-type zinc-finger motif lies at 166–224; sequence ASRVSCLNAKYGCKESTSYGNRFSHEQVCVFTPCSCPILDCHYTGYYKDLNNHVRAEHK. Residues C171, C178, H190, C194, C201, C206, H218, and H223 each coordinate Zn(2+).

It belongs to the SINA (Seven in absentia) family.

The catalysed reaction is S-ubiquitinyl-[E2 ubiquitin-conjugating enzyme]-L-cysteine + [acceptor protein]-L-lysine = [E2 ubiquitin-conjugating enzyme]-L-cysteine + N(6)-ubiquitinyl-[acceptor protein]-L-lysine.. The protein operates within protein modification; protein ubiquitination. Functionally, E3 ubiquitin-protein ligase that mediates ubiquitination and subsequent proteasomal degradation of target proteins. E3 ubiquitin ligases accept ubiquitin from an E2 ubiquitin-conjugating enzyme in the form of a thioester and then directly transfers the ubiquitin to targeted substrates. It probably triggers the ubiquitin-mediated degradation of different substrates. This Arabidopsis thaliana (Mouse-ear cress) protein is E3 ubiquitin-protein ligase SINA-like 10.